Here is a 606-residue protein sequence, read N- to C-terminus: Pickpocket protein 28 (606 aa).

Residues 1-26 form a disordered region; that stretch reads MRTLTESRRRQSGSSGCKKDSESDDD. The next 2 helical transmembrane spans lie at 66–86 and 490–510; these read IFFGLAFVLVVILSVFFISNV and GLLGLFMGFSIFSVIEIFFYI.

The protein belongs to the amiloride-sensitive sodium channel (TC 1.A.6) family. As to expression, expressed in water-sensing neurons in taste bristles on the proboscis but not in carbonation-sensing taste peg neurons (at protein level). Expressed in the tracheal system.

It is found in the cell membrane. In terms of biological role, osmosensitive ion channel that mediates the cellular and behavioral response to water. Plays an essential role in gustatory water reception. Part of a complex that plays a role in tracheal liquid clearance. Probable role in sodium transport. This is Pickpocket protein 28 (ppk28) from Drosophila melanogaster (Fruit fly).